Consider the following 686-residue polypeptide: Potassium-transporting ATPase ATP-binding subunit (686 aa).

2 helical membrane passes run 38–58 and 64–84; these read VMFVVWAGSLLTTVLVVKDLV and AAPLGFTVQVTLWLWFTVLFA. A disordered region spans residues 101-123; it reads ALRKMRKETTARRWKDGREERVP. A compositionally biased stretch (basic and acidic residues) spans 107 to 123; that stretch reads KETTARRWKDGREERVP. 2 helical membrane passes run 224 to 244 and 257 to 277; these read ILLVGLTLIFLLACVTLVPLA and VALLVCLIPTTIGGLLSAIGI. Catalysis depends on Asp-308, which acts as the 4-aspartylphosphate intermediate. ATP-binding positions include Asp-345, Glu-349, 378–385, and Lys-399; that span reads FTAQTRMS. Residues Asp-522 and Asp-526 each coordinate Mg(2+). 3 helical membrane-spanning segments follow: residues 592-612, 620-640, and 666-686; these read FAILPALFMGVFPQIAPLNVM, AVLSAVIFNALIIILLIPLAL, and VIVPFVGIKVIDVLLGAVGLA.

The protein belongs to the cation transport ATPase (P-type) (TC 3.A.3) family. Type IA subfamily. In terms of assembly, the system is composed of three essential subunits: KdpA, KdpB and KdpC.

It is found in the cell membrane. The enzyme catalyses K(+)(out) + ATP + H2O = K(+)(in) + ADP + phosphate + H(+). Its function is as follows. Part of the high-affinity ATP-driven potassium transport (or Kdp) system, which catalyzes the hydrolysis of ATP coupled with the electrogenic transport of potassium into the cytoplasm. This subunit is responsible for energy coupling to the transport system and for the release of the potassium ions to the cytoplasm. In Myxococcus xanthus, this protein is Potassium-transporting ATPase ATP-binding subunit.